We begin with the raw amino-acid sequence, 91 residues long: Mercuric transport protein periplasmic component (91 aa).

The N-terminal stretch at 1–19 (MKKLFASLALAAVVAPVWA) is a signal peptide. In terms of domain architecture, HMA spans 22 to 88 (QTVTLSVPGM…ATADAGYPSS (67 aa)). Hg(2+) is bound by residues Cys-33 and Cys-36.

This sequence belongs to the MerP family. In terms of assembly, monomer.

It localises to the periplasm. Its function is as follows. Involved in mercury resistance. Acts as a mercury scavenger that specifically binds to a mercuric ion in the periplasm and probably passes it to the cytoplasmic mercuric reductase MerA via the mercuric transport protein MerT. This Pseudomonas aeruginosa protein is Mercuric transport protein periplasmic component.